Reading from the N-terminus, the 305-residue chain is Methionyl-tRNA formyltransferase (305 aa).

111-114 contacts (6S)-5,6,7,8-tetrahydrofolate; it reads SLLP.

It belongs to the Fmt family.

The enzyme catalyses L-methionyl-tRNA(fMet) + (6R)-10-formyltetrahydrofolate = N-formyl-L-methionyl-tRNA(fMet) + (6S)-5,6,7,8-tetrahydrofolate + H(+). Its function is as follows. Attaches a formyl group to the free amino group of methionyl-tRNA(fMet). The formyl group appears to play a dual role in the initiator identity of N-formylmethionyl-tRNA by promoting its recognition by IF2 and preventing the misappropriation of this tRNA by the elongation apparatus. In Helicobacter pylori (strain J99 / ATCC 700824) (Campylobacter pylori J99), this protein is Methionyl-tRNA formyltransferase.